The primary structure comprises 506 residues: Maturase K (506 aa).

This sequence belongs to the intron maturase 2 family. MatK subfamily.

Its subcellular location is the plastid. It localises to the chloroplast. Its function is as follows. Usually encoded in the trnK tRNA gene intron. Probably assists in splicing its own and other chloroplast group II introns. This is Maturase K from Medicago truncatula (Barrel medic).